We begin with the raw amino-acid sequence, 290 residues long: Flap endonuclease Xni (290 aa).

Mg(2+) is bound at residue D125. The region spanning 181-275 is the 5'-3' exonuclease domain; it reads VKTSQLIDFW…DIRLTTSSSA (95 aa). 3 residues coordinate K(+): L192, V203, and I206. The tract at residues 205-210 is interaction with DNA; it reads GIGQVT.

The protein belongs to the Xni family. It depends on Mg(2+) as a cofactor. Requires K(+) as cofactor.

Functionally, has flap endonuclease activity. During DNA replication, flap endonucleases cleave the 5'-overhanging flap structure that is generated by displacement synthesis when DNA polymerase encounters the 5'-end of a downstream Okazaki fragment. The chain is Flap endonuclease Xni from Colwellia psychrerythraea (strain 34H / ATCC BAA-681) (Vibrio psychroerythus).